The primary structure comprises 483 residues: Protein adenylyltransferase Fic (483 aa).

The helical transmembrane segment at 20-42 (AFFFIAGSLATFVFHALTSSSSV) threads the bilayer. TPR repeat units lie at residues 107 to 140 (ALGAMRLALDMHISGKDDKAARLFEHALALAPKH) and 141 to 175 (PEVLLRYGEFLEHNQRNIVLADQYYFQALSISPSN). The Inhibitory (S/T)XXXE(G/N) motif motif lies at 232–237 (SVGIEG). ATP-binding positions include Glu-236 and 317–320 (VGGH). The Fido domain maps to 286-421 (ITLKDILELH…IRPFVRFIAD (136 aa)). His-364 is an active-site residue. Residues 368–375 (DGNGRTSR), 400–401 (YY), and Asn-408 each bind ATP. The segment at 464 to 483 (SAPEPYESGSGLDSGVNGMP) is disordered.

The protein belongs to the fic family. Homodimer.

Its subcellular location is the membrane. It carries out the reaction L-tyrosyl-[protein] + ATP = O-(5'-adenylyl)-L-tyrosyl-[protein] + diphosphate. The catalysed reaction is L-threonyl-[protein] + ATP = 3-O-(5'-adenylyl)-L-threonyl-[protein] + diphosphate. The enzyme catalyses 3-O-(5'-adenylyl)-L-threonyl-[protein] + H2O = L-threonyl-[protein] + AMP + H(+). The side chain of Glu-236 determines which of the two opposing activities (AMPylase or de-AMPylase) will take place. In response to endoplasmic reticulum stress, mediates de-AMPylase activity. Adenylyltransferase activity is inhibited by the inhibitory helix present at the N-terminus: Glu-236 binds ATP and competes with ATP-binding at Arg-375, thereby preventing adenylyltransferase activity. In unstressed cells, disengagement of Glu-236 promotes adenylyltransferase activity. Activation dissociates ATP-binding from Glu-236, allowing ordered binding of the entire ATP moiety with the alpha-phosphate in an orientation that is productive for accepting an incoming target hydroxyl side chain. Protein that can both mediate the addition of adenosine 5'-monophosphate (AMP) to specific residues of target proteins (AMPylation), and the removal of the same modification from target proteins (de-AMPylation), depending on the context. The side chain of Glu-236 determines which of the two opposing activities (AMPylase or de-AMPylase) will take place. Acts as a key regulator of the unfolded protein response (UPR) by mediating AMPylation or de-AMPylation of Hsc70-3/BiP. In unstressed cells, acts as an adenylyltransferase by mediating AMPylation of Hsc70-3/BiP at 'Thr-518', thereby inactivating it. In response to endoplasmic reticulum stress, acts as a phosphodiesterase by mediating removal of ATP (de-AMPylation) from Hsc70-3/BiP at 'Thr-518', leading to restore HSPA5/BiP activity. This chain is Protein adenylyltransferase Fic, found in Drosophila grimshawi (Hawaiian fruit fly).